Reading from the N-terminus, the 98-residue chain is Spermatogenesis-associated protein 45 (98 aa).

Belongs to the SPATA45 family.

The protein is Spermatogenesis-associated protein 45 (SPATA45) of Homo sapiens (Human).